Here is a 195-residue protein sequence, read N- to C-terminus: Dehydrin DHN1 (195 aa).

A disordered region spans residues 1–195 (MAEYGDQYGR…IKEKLPGGHH (195 aa)). Positions 37-48 (YGTTGTTVGYGT) are enriched in low complexity. A compositionally biased stretch (polar residues) spans 50–64 (QCVTTVTTGAQKTDQ). Residues 65–88 (YGTPGTTGAYGTDQYGTTGTTGEY) are compositionally biased toward low complexity. Basic and acidic residues-rich tracts occupy residues 136 to 153 (KEKIKEKLPGGGHGDDQT) and 173 to 195 (SPEHEEKKGIMDKIKEKLPGGHH).

Belongs to the plant dehydrin family. In terms of processing, phosphorylated in vitro by CK2. In terms of tissue distribution, expressed in roots and leaves.

The protein localises to the cytoplasm. Its subcellular location is the nucleus. This chain is Dehydrin DHN1, found in Avicennia marina (Grey mangrove).